Reading from the N-terminus, the 185-residue chain is Ribosome hibernation promotion factor (185 aa).

Positions 1–125 (MIKFNIRGEN…PLDTTDEVAE (125 aa)) are probably still associates with ribosome. The interval 126–185 (DHVDIVRTKHVALKPMDAEEAVLQMDMLGHDFYVFTDADSNGTHVVYRRTDGRYGLIETE) is required but not sufficient to restore ribosome dimerization, in vitro will replace E.coli RMF in ribosome dimerization.

It belongs to the HPF/YfiA ribosome-associated protein family. Long HPF subfamily. In terms of assembly, interacts with 100S ribosomes in stationary phase; alters the relative position of the 30S and 50S subunits.

Its subcellular location is the cytoplasm. Its function is as follows. Required for dimerization of active 70S ribosomes into 100S ribosomes in stationary phase; 100S ribosomes are translationally inactive and sometimes present during exponential growth. Able to dimerize E.coli 70S ribosomes in vitro. The sequence is that of Ribosome hibernation promotion factor from Lactococcus lactis subsp. cremoris (strain MG1363).